The chain runs to 445 residues: UPF0210 protein SP_0239 (445 aa).

This sequence belongs to the UPF0210 family. Homodimer.

This Streptococcus pneumoniae serotype 4 (strain ATCC BAA-334 / TIGR4) protein is UPF0210 protein SP_0239.